Consider the following 410-residue polypeptide: Peptidase T (410 aa).

His79 serves as a coordination point for Zn(2+). Residue Asp81 is part of the active site. Asp142 is a binding site for Zn(2+). Glu176 functions as the Proton acceptor in the catalytic mechanism. Residues Glu177, Asp199, and His381 each contribute to the Zn(2+) site.

Belongs to the peptidase M20B family. Requires Zn(2+) as cofactor.

The protein localises to the cytoplasm. The enzyme catalyses Release of the N-terminal residue from a tripeptide.. In terms of biological role, cleaves the N-terminal amino acid of tripeptides. This is Peptidase T from Bacillus thuringiensis (strain Al Hakam).